The chain runs to 623 residues: Glutathione import ATP-binding protein GsiA (623 aa).

2 consecutive ABC transporter domains span residues 15-269 and 325-564; these read VSGL…QTLL and LRSG…RKLM. ATP-binding positions include 49–56 and 357–364; these read GESGSGKS.

This sequence belongs to the ABC transporter superfamily. Glutathione importer (TC 3.A.1.5.11) family. As to quaternary structure, the complex is composed of two ATP-binding proteins (GsiA), two transmembrane proteins (GsiC and GsiD) and a solute-binding protein (GsiB).

It is found in the cell inner membrane. It catalyses the reaction glutathione(out) + ATP + H2O = glutathione(in) + ADP + phosphate + H(+). In terms of biological role, part of the ABC transporter complex GsiABCD involved in glutathione import. Responsible for energy coupling to the transport system. This chain is Glutathione import ATP-binding protein GsiA, found in Salmonella typhimurium (strain LT2 / SGSC1412 / ATCC 700720).